The following is a 301-amino-acid chain: 4-hydroxy-tetrahydrodipicolinate synthase (301 aa).

Thr-57 lines the pyruvate pocket. Tyr-143 functions as the Proton donor/acceptor in the catalytic mechanism. Lys-171 acts as the Schiff-base intermediate with substrate in catalysis. Ile-211 contributes to the pyruvate binding site.

This sequence belongs to the DapA family. As to quaternary structure, homotetramer; dimer of dimers.

It localises to the cytoplasm. The catalysed reaction is L-aspartate 4-semialdehyde + pyruvate = (2S,4S)-4-hydroxy-2,3,4,5-tetrahydrodipicolinate + H2O + H(+). It participates in amino-acid biosynthesis; L-lysine biosynthesis via DAP pathway; (S)-tetrahydrodipicolinate from L-aspartate: step 3/4. Catalyzes the condensation of (S)-aspartate-beta-semialdehyde [(S)-ASA] and pyruvate to 4-hydroxy-tetrahydrodipicolinate (HTPA). This is 4-hydroxy-tetrahydrodipicolinate synthase from Bifidobacterium longum (strain DJO10A).